A 187-amino-acid chain; its full sequence is PRA1 family protein G1 (187 aa).

3 consecutive transmembrane segments (helical) span residues L84 to L104, V125 to Q145, and C146 to N166.

It belongs to the PRA1 family. In terms of tissue distribution, expressed in roots and lateral roots.

It localises to the endosome membrane. May be involved in both secretory and endocytic intracellular trafficking in the endosomal/prevacuolar compartments. This is PRA1 family protein G1 (PRA1G1) from Arabidopsis thaliana (Mouse-ear cress).